The sequence spans 713 residues: Phospholipase A1 PLIP2, chloroplastic (713 aa).

Residues 1–32 (MDSLCLNSGLHGVIPAITAVGNGGCGGVVEVR) constitute a chloroplast transit peptide. Disordered stretches follow at residues 118–140 (WKHEEEEDDDEVEDEDGDEDEEV) and 232–261 (ALKAENGEVSGETKPIVEAEEEVEEEEKNK). Over residues 122–140 (EEEDDDEVEDEDGDEDEEV) the composition is skewed to acidic residues. A GXSXG motif is present at residues 426 to 430 (GHSLG). The active-site Acyl-ester intermediate is S428. Residues D489 and H608 each act as charge relay system in the active site.

This sequence belongs to the AB hydrolase superfamily. Lipase family.

The protein localises to the plastid. It is found in the chloroplast membrane. It localises to the chloroplast stroma. It catalyses the reaction a 1,2-diacyl-3-O-(beta-D-galactosyl)-sn-glycerol + 2 H2O = 3-beta-D-galactosyl-sn-glycerol + 2 a fatty acid + 2 H(+). The enzyme catalyses a 1,2-diacyl-sn-glycero-3-phosphocholine + H2O = a 2-acyl-sn-glycero-3-phosphocholine + a fatty acid + H(+). The catalysed reaction is 1-hexadecanoyl-2-(9Z-octadecenoyl)-sn-glycero-3-phosphocholine + H2O = 2-(9Z-octadecenoyl)-sn-glycero-3-phosphocholine + hexadecanoate + H(+). It carries out the reaction 1,2-di-(9Z-octadecenoyl)-sn-glycero-3-phosphocholine + H2O = 2-(9Z-octadecenoyl)-sn-glycero-3-phosphocholine + (9Z)-octadecenoate + H(+). It catalyses the reaction 1-octadecanoyl-2-(9Z-octadecenoyl)-sn-glycero-3-phosphocholine + H2O = 2-(9Z-octadecenoyl)-sn-glycero-3-phosphocholine + octadecanoate + H(+). The enzyme catalyses 1-octadecanoyl-2-(9Z,12Z)-octadecadienoyl-sn-glycero-3-phosphocholine + H2O = 2-(9Z,12Z-octadecadienoyl)-sn-glycero-3-phosphocholine + octadecanoate + H(+). The catalysed reaction is 1,2-di-(9Z,12Z-octadecadienoyl)-sn-glycero-3-phosphocholine + H2O = 2-(9Z,12Z-octadecadienoyl)-sn-glycero-3-phosphocholine + (9Z,12Z)-octadecadienoate + H(+). It carries out the reaction 1-(9Z-octadecenoyl)-2-hexadecanoyl-sn-glycero-3-phosphocholine + H2O = 2-hexadecanoyl-sn-glycero-3-phosphocholine + (9Z)-octadecenoate + H(+). Sn-1-specific phospholipase A1 that catalyzes the initial step of oxylipins and jasmonate (JA) biosynthesis. Hydrolyzes polyunsaturated acyl groups preferentially from chloroplastic monogalactosyldiacylglycerol (MGDG). May function downstream of abscisic acid (ABA) and provide a link between ABA-mediated abiotic stress responses and oxylipin and JA signalings. In vitro, possesses broad substrate specificity. Can hydrolyze the galactolipids monogalactosyldiacylglycerol (MGDG) and digalactosyldiacylglycerol (DGDG), the sulfolipid sulfoquinovosyldiacylglycerol (SQDG), and the phoshpolipids phosphatidylcholine (PC), and phosphatidylglycerol (PG). The polypeptide is Phospholipase A1 PLIP2, chloroplastic (Arabidopsis thaliana (Mouse-ear cress)).